Here is a 222-residue protein sequence, read N- to C-terminus: Phosphoribosylformylglycinamidine synthase subunit PurQ (222 aa).

The Glutamine amidotransferase type-1 domain maps to 3 to 222; the sequence is AAVLVFPGSN…ASLAAALVAA (220 aa). The Nucleophile role is filled by Cys86. Active-site residues include His194 and Glu196.

As to quaternary structure, part of the FGAM synthase complex composed of 1 PurL, 1 PurQ and 2 PurS subunits.

It localises to the cytoplasm. The enzyme catalyses N(2)-formyl-N(1)-(5-phospho-beta-D-ribosyl)glycinamide + L-glutamine + ATP + H2O = 2-formamido-N(1)-(5-O-phospho-beta-D-ribosyl)acetamidine + L-glutamate + ADP + phosphate + H(+). The catalysed reaction is L-glutamine + H2O = L-glutamate + NH4(+). It functions in the pathway purine metabolism; IMP biosynthesis via de novo pathway; 5-amino-1-(5-phospho-D-ribosyl)imidazole from N(2)-formyl-N(1)-(5-phospho-D-ribosyl)glycinamide: step 1/2. In terms of biological role, part of the phosphoribosylformylglycinamidine synthase complex involved in the purines biosynthetic pathway. Catalyzes the ATP-dependent conversion of formylglycinamide ribonucleotide (FGAR) and glutamine to yield formylglycinamidine ribonucleotide (FGAM) and glutamate. The FGAM synthase complex is composed of three subunits. PurQ produces an ammonia molecule by converting glutamine to glutamate. PurL transfers the ammonia molecule to FGAR to form FGAM in an ATP-dependent manner. PurS interacts with PurQ and PurL and is thought to assist in the transfer of the ammonia molecule from PurQ to PurL. The polypeptide is Phosphoribosylformylglycinamidine synthase subunit PurQ (Jannaschia sp. (strain CCS1)).